The chain runs to 107 residues: U1-lycotoxin-Ls1e (107 aa).

The signal sequence occupies residues 1–20; the sequence is MMKVLVVFALLVTLISYSSS. The propeptide occupies 21–41; it reads EGIDDLEADELLSLMANEQTR. 4 disulfides stabilise this stretch: cysteine 44-cysteine 59, cysteine 51-cysteine 68, cysteine 58-cysteine 86, and cysteine 70-cysteine 84.

Belongs to the neurotoxin 19 (CSTX) family. 04 (U1-Lctx) subfamily. As to expression, expressed by the venom gland.

The protein resides in the secreted. The sequence is that of U1-lycotoxin-Ls1e from Lycosa singoriensis (Wolf spider).